Reading from the N-terminus, the 653-residue chain is Zinc finger CCCH domain-containing protein 54 (653 aa).

The segment at 242–261 (NGGGGGGGSPARARRSNGLS) is disordered. The C3H1-type zinc-finger motif lies at 260–287 (LSTRRPCHYFSKGICKNGQNCHYSHHQV). One can recognise an HTH OST-type domain in the interval 313-396 (SLETLEMEIT…GQHSVVLAED (84 aa)). The region spanning 422–497 (HQIYLTFPAE…SRVLVKPYRE (76 aa)) is the RRM domain. A coiled-coil region spans residues 537–565 (RLMRKQLAEKREMLLEMERRRATVRRLES). Residues 598–623 (PSLASPDPLEIVSNSQAPPTQAGNIY) are disordered. Polar residues predominate over residues 609-620 (VSNSQAPPTQAG).

This is Zinc finger CCCH domain-containing protein 54 from Oryza sativa subsp. japonica (Rice).